The sequence spans 104 residues: Astakine (104 aa).

A signal peptide spans 1-22 (MKMRGVSVGVLVVAMMSGLAMA). 5 disulfide bridges follow: Cys25-Cys38, Cys32-Cys50, Cys37-Cys76, Cys60-Cys84, and Cys78-Cys91.

Belongs to the AVIT (prokineticin) family.

The protein resides in the secreted. Functionally, cytokine directly involved in hematopoiesis. This chain is Astakine, found in Pacifastacus leniusculus (Signal crayfish).